The chain runs to 220 residues: Ribose-5-phosphate isomerase A (220 aa).

Residues 25–28, 80–83, and 93–96 each bind substrate; these read TGST, DGAD, and KGGG. E102 acts as the Proton acceptor in catalysis. K120 serves as a coordination point for substrate.

This sequence belongs to the ribose 5-phosphate isomerase family. Homodimer.

It catalyses the reaction aldehydo-D-ribose 5-phosphate = D-ribulose 5-phosphate. Its pathway is carbohydrate degradation; pentose phosphate pathway; D-ribose 5-phosphate from D-ribulose 5-phosphate (non-oxidative stage): step 1/1. Functionally, catalyzes the reversible conversion of ribose-5-phosphate to ribulose 5-phosphate. This is Ribose-5-phosphate isomerase A from Bacillus cereus (strain ATCC 14579 / DSM 31 / CCUG 7414 / JCM 2152 / NBRC 15305 / NCIMB 9373 / NCTC 2599 / NRRL B-3711).